Here is an 84-residue protein sequence, read N- to C-terminus: Turripeptide IX-03 (84 aa).

Residues 1-21 (MGFYMLLTVALLLTSLMNVEA) form the signal peptide. Positions 22–39 (TPVDQAERSALEKSGLGN) are excised as a propeptide. Intrachain disulfides connect cysteine 48–cysteine 70, cysteine 55–cysteine 74, and cysteine 60–cysteine 81.

As to expression, expressed by the venom duct.

The protein localises to the secreted. The chain is Turripeptide IX-03 from Gemmula speciosa (Splendid gem-turris).